We begin with the raw amino-acid sequence, 317 residues long: Apolipoprotein E (317 aa).

A signal peptide spans 1-18 (MKVLWAALLVTFLAGCQA). A run of 8 repeats spans residues 80–101 (ALMD…EQLT), 102–123 (PVAE…ARLG), 124–145 (ADME…AMLG), 146–167 (QSTE…KRLL), 168–189 (RDAD…EGAE), 190–211 (RGVS…VRAA), 212–233 (TVGS…ERLR), and 234–255 (ARME…EQVA). The 8 X 22 AA approximate tandem repeats stretch occupies residues 80-255 (ALMDETMKEL…RLDEVKEQVA (176 aa)). The residue at position 143 (Met-143) is a Methionine sulfoxide. Ser-147 carries the phosphoserine modification. Residues 158-168 (HLRKLRKRLLR) are LDL and other lipoprotein receptors binding. Residue 162–165 (LRKR) participates in heparin binding. The tract at residues 210 to 290 (AATVGSLAGQ…SWFEPLVEDM (81 aa)) is lipid-binding and lipoprotein association. Residue 229 to 236 (GERLRARM) participates in heparin binding. Residues 266-317 (QQIRLQAEAFQARLKSWFEPLVEDMQRQWAGLVEKVQAAMGTSAAPVPSDNH) are homooligomerization. Residues 278 to 290 (RLKSWFEPLVEDM) form a specificity for association with VLDL region.

The protein belongs to the apolipoprotein A1/A4/E family. In terms of assembly, homotetramer. May interact with ABCA1; functionally associated with ABCA1 in the biogenesis of HDLs. May interact with APP/A4 amyloid-beta peptide; the interaction is extremely stable in vitro but its physiological significance is unclear. May interact with MAPT. May interact with MAP2. In the cerebrospinal fluid, interacts with secreted SORL1. Interacts with PMEL; this allows the loading of PMEL luminal fragment on ILVs to induce fibril nucleation. Post-translationally, APOE exists as multiple glycosylated and sialylated glycoforms within cells and in plasma. The extent of glycosylation and sialylation are tissue and context specific. Glycated in plasma VLDL. In terms of processing, phosphorylated by FAM20C in the extracellular medium.

The protein localises to the secreted. Its subcellular location is the extracellular space. The protein resides in the extracellular matrix. It is found in the extracellular vesicle. It localises to the endosome. The protein localises to the multivesicular body. Functionally, APOE is an apolipoprotein, a protein associating with lipid particles, that mainly functions in lipoprotein-mediated lipid transport between organs via the plasma and interstitial fluids. APOE is a core component of plasma lipoproteins and is involved in their production, conversion and clearance. Apolipoproteins are amphipathic molecules that interact both with lipids of the lipoprotein particle core and the aqueous environment of the plasma. As such, APOE associates with chylomicrons, chylomicron remnants, very low density lipoproteins (VLDL) and intermediate density lipoproteins (IDL) but shows a preferential binding to high-density lipoproteins (HDL). It also binds a wide range of cellular receptors including the LDL receptor/LDLR, the LDL receptor-related proteins LRP1, LRP2 and LRP8 and the very low-density lipoprotein receptor/VLDLR that mediate the cellular uptake of the APOE-containing lipoprotein particles. Finally, APOE also has a heparin-binding activity and binds heparan-sulfate proteoglycans on the surface of cells, a property that supports the capture and the receptor-mediated uptake of APOE-containing lipoproteins by cells. A main function of APOE is to mediate lipoprotein clearance through the uptake of chylomicrons, VLDLs, and HDLs by hepatocytes. APOE is also involved in the biosynthesis by the liver of VLDLs as well as their uptake by peripheral tissues ensuring the delivery of triglycerides and energy storage in muscle, heart and adipose tissues. By participating in the lipoprotein-mediated distribution of lipids among tissues, APOE plays a critical role in plasma and tissues lipid homeostasis. APOE is also involved in two steps of reverse cholesterol transport, the HDLs-mediated transport of cholesterol from peripheral tissues to the liver, and thereby plays an important role in cholesterol homeostasis. First, it is functionally associated with ABCA1 in the biogenesis of HDLs in tissues. Second, it is enriched in circulating HDLs and mediates their uptake by hepatocytes. APOE also plays an important role in lipid transport in the central nervous system, regulating neuron survival and sprouting. The polypeptide is Apolipoprotein E (APOE) (Pan troglodytes (Chimpanzee)).